Consider the following 152-residue polypeptide: Endoribonuclease YbeY (152 aa).

Zn(2+) is bound by residues H114, H118, and H124.

This sequence belongs to the endoribonuclease YbeY family. The cofactor is Zn(2+).

The protein localises to the cytoplasm. In terms of biological role, single strand-specific metallo-endoribonuclease involved in late-stage 70S ribosome quality control and in maturation of the 3' terminus of the 16S rRNA. The protein is Endoribonuclease YbeY of Coxiella burnetii (strain CbuK_Q154) (Coxiella burnetii (strain Q154)).